Here is a 98-residue protein sequence, read N- to C-terminus: Omega-hexatoxin-Hr2b (98 aa).

The N-terminal stretch at 1–22 (MKFSKLSLTLALILTQVLFVLC) is a signal peptide. Positions 24–56 (KINEDFMKHGLESQALHDEIRKPIDSENPDTER) are excised as a propeptide. Intrachain disulfides connect Cys60–Cys74, Cys67–Cys80, and Cys73–Cys85. Leu97 is subject to Leucine amide.

This sequence belongs to the neurotoxin 15 family. 02 (omega-actx) subfamily. In terms of tissue distribution, expressed by the venom gland.

It localises to the secreted. In terms of biological role, potent inhibitor of insect, but not mammalian, voltage-gated calcium channels (Cav). This Atrax robustus (Sydney funnel-web spider) protein is Omega-hexatoxin-Hr2b.